The primary structure comprises 224 residues: Putative O-methyltransferase MT1258 (224 aa).

Residues 1–10 (MDGTPGHDDM) show a composition bias toward basic and acidic residues. Positions 1–21 (MDGTPGHDDMPGQPAPSRGES) are disordered. S-adenosyl-L-methionine-binding positions include V51, E73, 75 to 76 (GT), S81, D99, and I100. D147 is a binding site for substrate. D149 serves as a coordination point for S-adenosyl-L-methionine.

The protein belongs to the class I-like SAM-binding methyltransferase superfamily. Cation-dependent O-methyltransferase family.

This is Putative O-methyltransferase MT1258 from Mycobacterium tuberculosis (strain CDC 1551 / Oshkosh).